A 226-amino-acid chain; its full sequence is 2-C-methyl-D-erythritol 4-phosphate cytidylyltransferase (226 aa).

Belongs to the IspD/TarI cytidylyltransferase family. IspD subfamily.

It carries out the reaction 2-C-methyl-D-erythritol 4-phosphate + CTP + H(+) = 4-CDP-2-C-methyl-D-erythritol + diphosphate. The protein operates within isoprenoid biosynthesis; isopentenyl diphosphate biosynthesis via DXP pathway; isopentenyl diphosphate from 1-deoxy-D-xylulose 5-phosphate: step 2/6. Its function is as follows. Catalyzes the formation of 4-diphosphocytidyl-2-C-methyl-D-erythritol from CTP and 2-C-methyl-D-erythritol 4-phosphate (MEP). This Synechococcus sp. (strain CC9902) protein is 2-C-methyl-D-erythritol 4-phosphate cytidylyltransferase.